A 201-amino-acid polypeptide reads, in one-letter code: 3-isopropylmalate dehydratase small subunit (201 aa).

The protein belongs to the LeuD family. LeuD type 1 subfamily. Heterodimer of LeuC and LeuD.

The catalysed reaction is (2R,3S)-3-isopropylmalate = (2S)-2-isopropylmalate. It functions in the pathway amino-acid biosynthesis; L-leucine biosynthesis; L-leucine from 3-methyl-2-oxobutanoate: step 2/4. Catalyzes the isomerization between 2-isopropylmalate and 3-isopropylmalate, via the formation of 2-isopropylmaleate. The polypeptide is 3-isopropylmalate dehydratase small subunit (Thermus thermophilus (strain ATCC BAA-163 / DSM 7039 / HB27)).